The following is a 416-amino-acid chain: S-adenosylmethionine synthase (416 aa).

His-14 is a binding site for ATP. Asp-16 contributes to the Mg(2+) binding site. Residue Glu-42 coordinates K(+). 2 residues coordinate L-methionine: Glu-55 and Gln-98. Positions 98 to 108 (QSADINQGVDR) are flexible loop. Residues 164-166 (DAK), 240-241 (KF), Asp-249, 255-256 (RK), Ala-272, and Lys-276 contribute to the ATP site. Residue Asp-249 participates in L-methionine binding. Lys-280 lines the L-methionine pocket.

This sequence belongs to the AdoMet synthase family. As to quaternary structure, homotetramer; dimer of dimers. It depends on Mg(2+) as a cofactor. Requires K(+) as cofactor.

It is found in the cytoplasm. It catalyses the reaction L-methionine + ATP + H2O = S-adenosyl-L-methionine + phosphate + diphosphate. It functions in the pathway amino-acid biosynthesis; S-adenosyl-L-methionine biosynthesis; S-adenosyl-L-methionine from L-methionine: step 1/1. In terms of biological role, catalyzes the formation of S-adenosylmethionine (AdoMet) from methionine and ATP. The overall synthetic reaction is composed of two sequential steps, AdoMet formation and the subsequent tripolyphosphate hydrolysis which occurs prior to release of AdoMet from the enzyme. In Flavobacterium psychrophilum (strain ATCC 49511 / DSM 21280 / CIP 103535 / JIP02/86), this protein is S-adenosylmethionine synthase.